The following is a 274-amino-acid chain: Glutamate racemase (274 aa).

Substrate contacts are provided by residues 10–11 (DS) and 42–43 (YG). Residue C73 is the Proton donor/acceptor of the active site. A substrate-binding site is contributed by 74 to 75 (NT). C184 functions as the Proton donor/acceptor in the catalytic mechanism. Position 185 to 186 (185 to 186 (TH)) interacts with substrate.

It belongs to the aspartate/glutamate racemases family.

The enzyme catalyses L-glutamate = D-glutamate. The protein operates within cell wall biogenesis; peptidoglycan biosynthesis. Its function is as follows. Provides the (R)-glutamate required for cell wall biosynthesis. The chain is Glutamate racemase from Latilactobacillus sakei subsp. sakei (strain 23K) (Lactobacillus sakei subsp. sakei).